Consider the following 442-residue polypeptide: ATP-dependent RNA helicase SUB2-2 (442 aa).

Residues 58–86 (TGFKDFLLKPELARAIIDCGFEHPSEVQQ) carry the Q motif motif. A Helicase ATP-binding domain is found at 89–264 (IPQSIHGTDV…RRFLQNPLEI (176 aa)). 102–109 (AKSGLGKT) lines the ATP pocket. Residues 211–214 (DECD) carry the DECD box motif. A Helicase C-terminal domain is found at 292–437 (KLAQLLDDLE…EFPEEGIDPS (146 aa)).

Belongs to the DEAD box helicase family. DECD subfamily.

Its subcellular location is the nucleus. It carries out the reaction ATP + H2O = ADP + phosphate + H(+). Functionally, ATP-binding RNA helicase involved in transcription elongation and required for the export of mRNA out of the nucleus. SUB2 also plays a role in pre-mRNA splicing and spliceosome assembly. May be involved in rDNA and telomeric silencing, and maintenance of genome integrity. This is ATP-dependent RNA helicase SUB2-2 (SUB2-2) from Vanderwaltozyma polyspora (strain ATCC 22028 / DSM 70294 / BCRC 21397 / CBS 2163 / NBRC 10782 / NRRL Y-8283 / UCD 57-17) (Kluyveromyces polysporus).